A 214-amino-acid chain; its full sequence is Ribosomal RNA small subunit methyltransferase G (214 aa).

Residues Gly-72, Phe-77, 125-126, and Arg-141 each bind S-adenosyl-L-methionine; that span reads VE.

It belongs to the methyltransferase superfamily. RNA methyltransferase RsmG family.

The protein localises to the cytoplasm. It carries out the reaction guanosine(527) in 16S rRNA + S-adenosyl-L-methionine = N(7)-methylguanosine(527) in 16S rRNA + S-adenosyl-L-homocysteine. Its function is as follows. Specifically methylates the N7 position of guanine in position 527 of 16S rRNA. The polypeptide is Ribosomal RNA small subunit methyltransferase G (Sinorhizobium fredii (strain NBRC 101917 / NGR234)).